The sequence spans 513 residues: uncharacterized protein (513 aa).

Residues 11 to 219 (HLEVERKFDV…SKLARVLGAT (209 aa)) enclose the CYTH domain. A CHAD domain is found at 228-506 (PQPPADPVHR…LEAALRKLDK (279 aa)).

This is an uncharacterized protein from Mycobacterium tuberculosis (strain CDC 1551 / Oshkosh).